A 499-amino-acid polypeptide reads, in one-letter code: Maturase K (499 aa).

Belongs to the intron maturase 2 family. MatK subfamily.

It localises to the plastid. Its subcellular location is the chloroplast. Usually encoded in the trnK tRNA gene intron. Probably assists in splicing its own and other chloroplast group II introns. The sequence is that of Maturase K from Neltuma juliflora (Mesquite).